The chain runs to 98 residues: NADH-ubiquinone oxidoreductase chain 4L (98 aa).

3 consecutive transmembrane segments (helical) span residues 1–21 (MSLV…GLLM), 29–49 (SLLC…LMIL), and 61–81 (IILL…LVMV).

It belongs to the complex I subunit 4L family. As to quaternary structure, core subunit of respiratory chain NADH dehydrogenase (Complex I) which is composed of 45 different subunits.

The protein localises to the mitochondrion inner membrane. The enzyme catalyses a ubiquinone + NADH + 5 H(+)(in) = a ubiquinol + NAD(+) + 4 H(+)(out). Core subunit of the mitochondrial membrane respiratory chain NADH dehydrogenase (Complex I) which catalyzes electron transfer from NADH through the respiratory chain, using ubiquinone as an electron acceptor. Part of the enzyme membrane arm which is embedded in the lipid bilayer and involved in proton translocation. This chain is NADH-ubiquinone oxidoreductase chain 4L (MT-ND4L), found in Pantholops hodgsonii (Chiru).